The chain runs to 227 residues: Enolase-phosphatase E1 (227 aa).

Belongs to the HAD-like hydrolase superfamily. MasA/MtnC family. Monomer. It depends on Mg(2+) as a cofactor.

The catalysed reaction is 5-methylsulfanyl-2,3-dioxopentyl phosphate + H2O = 1,2-dihydroxy-5-(methylsulfanyl)pent-1-en-3-one + phosphate. It functions in the pathway amino-acid biosynthesis; L-methionine biosynthesis via salvage pathway; L-methionine from S-methyl-5-thio-alpha-D-ribose 1-phosphate: step 3/6. Its pathway is amino-acid biosynthesis; L-methionine biosynthesis via salvage pathway; L-methionine from S-methyl-5-thio-alpha-D-ribose 1-phosphate: step 4/6. Bifunctional enzyme that catalyzes the enolization of 2,3-diketo-5-methylthiopentyl-1-phosphate (DK-MTP-1-P) into the intermediate 2-hydroxy-3-keto-5-methylthiopentenyl-1-phosphate (HK-MTPenyl-1-P), which is then dephosphorylated to form the acireductone 1,2-dihydroxy-3-keto-5-methylthiopentene (DHK-MTPene). The polypeptide is Enolase-phosphatase E1 (Pseudomonas syringae pv. tomato (strain ATCC BAA-871 / DC3000)).